Here is a 312-residue protein sequence, read N- to C-terminus: Methionyl-tRNA formyltransferase (312 aa).

A (6S)-5,6,7,8-tetrahydrofolate-binding site is contributed by 117–120; the sequence is SLLP.

Belongs to the Fmt family.

The catalysed reaction is L-methionyl-tRNA(fMet) + (6R)-10-formyltetrahydrofolate = N-formyl-L-methionyl-tRNA(fMet) + (6S)-5,6,7,8-tetrahydrofolate + H(+). Its function is as follows. Attaches a formyl group to the free amino group of methionyl-tRNA(fMet). The formyl group appears to play a dual role in the initiator identity of N-formylmethionyl-tRNA by promoting its recognition by IF2 and preventing the misappropriation of this tRNA by the elongation apparatus. This chain is Methionyl-tRNA formyltransferase, found in Bordetella bronchiseptica (strain ATCC BAA-588 / NCTC 13252 / RB50) (Alcaligenes bronchisepticus).